A 309-amino-acid chain; its full sequence is MTLLTDATPLVKEPHPLPLVPRPWFLPSLFAAFNVVLLVFFSGLFFAFPCRWLAQNGEWAFPVITGSLFVLTFFSLVSLNFSDPGILHQGSAEQGPLTVHVVWVNHGAFRLQWCPKCCFHRPPRTYHCPWCNICVEDFDHHCKWVNNCIGHRNFRFFMLLVLSLCLYSGAMLVTCLIFLVRTTHLPFSTDKAIAIVVAVSAAGLLVPLSLLLLIQALSVSSADRTYKGKCRHLQGYNPFDQGCASNWYLTICAPLGPKYMAEAVQLQRVVGPDWTSMPNLHPPMSPSALNPPAPTSGSLQSREGTPGAW.

2 helical membrane-spanning segments follow: residues 29-49 (LFAAFNVVLLVFFSGLFFAFP) and 59-79 (WAFPVITGSLFVLTFFSLVSL). Residues 112 to 162 (QWCPKCCFHRPPRTYHCPWCNICVEDFDHHCKWVNNCIGHRNFRFFMLLVL) enclose the DHHC domain. The active-site S-palmitoyl cysteine intermediate is Cys142. The next 2 helical transmembrane spans lie at 160 to 180 (LVLSLCLYSGAMLVTCLIFLV) and 193 to 213 (IAIVVAVSAAGLLVPLSLLLL). Pro residues predominate over residues 280–294 (LHPPMSPSALNPPAP). The tract at residues 280–309 (LHPPMSPSALNPPAPTSGSLQSREGTPGAW) is disordered.

The protein belongs to the DHHC palmitoyltransferase family.

The protein resides in the golgi apparatus membrane. It localises to the cytoplasm. The protein localises to the perinuclear region. It carries out the reaction L-cysteinyl-[protein] + hexadecanoyl-CoA = S-hexadecanoyl-L-cysteinyl-[protein] + CoA. In terms of biological role, palmitoyltransferase that mediates palmitoylation oproteins, such as RRAS and SQSTM1. Catalyzes palmitoylation of RRAS, leading to increased cell viability. Acts as a positive regulator of autophagy by mediating palmitoylation of SQSTM1, promoting affinity between SQSTM1 and ATG8 proteins and recruitment of ubiquitinated cargo proteins to autophagosomes. (Microbial infection) Promotes Chikungunya virus (CHIKV) replication by mediating viral nsp1 palmitoylation. The sequence is that of Palmitoyltransferase ZDHHC19 from Homo sapiens (Human).